The sequence spans 567 residues: Urease subunit alpha (567 aa).

Residues 129 to 567 enclose the Urease domain; it reads GGIDTHIHFI…LPMAQRYFLF (439 aa). H134, H136, and K217 together coordinate Ni(2+). Position 217 is an N6-carboxylysine (K217). Residue H219 participates in substrate binding. H246 and H272 together coordinate Ni(2+). The active-site Proton donor is the H320. D360 provides a ligand contact to Ni(2+).

This sequence belongs to the metallo-dependent hydrolases superfamily. Urease alpha subunit family. In terms of assembly, heterotrimer of UreA (gamma), UreB (beta) and UreC (alpha) subunits. Three heterotrimers associate to form the active enzyme. Ni cation serves as cofactor. Carboxylation allows a single lysine to coordinate two nickel ions.

The protein resides in the cytoplasm. The catalysed reaction is urea + 2 H2O + H(+) = hydrogencarbonate + 2 NH4(+). Its pathway is nitrogen metabolism; urea degradation; CO(2) and NH(3) from urea (urease route): step 1/1. This chain is Urease subunit alpha, found in Delftia acidovorans (strain DSM 14801 / SPH-1).